The sequence spans 1883 residues: MAGGGGVGGGAGEHAAAAYWYDACEDGASLLCGIDFAASADFDPGLIPAMDTGADDGFVAEIDRILESINAESSPAPPPPPPPPLPEPVPVAPPELPIQEKQLQVASAPVANNAVAVVGVVQRSKGVVARKEPRRESHGCAANGGGGGEWRDGKRPRLASGGVGGPRQEWRRRPMLPPPPSRGWDDRRGRRDFDRVRKHEHHRREARGFWERDRGGKMVFRSGTWEQESDREAKRARTQDGGSMEKKAEADRMGAAQREKPVAEERARQYQLEVLEQAKSRNTIAFLETGAGKTLIAVLLIKSVCDKMLKENKKMLAVFLVPKVPLVYQVLVMTAQILLNILRHSIIKMDAIHLLILDECHHAVKKHPYSLVMSEFYHTTPKEKRPAVFGMTASPVNLKGVTSQEDCAIKIRNLESKLDSVVCTIKDRKELEKHVPMPLEVVVQYDKAATLWSLHEQIKQMESTVEEAALSSSKRTKWQFMGARDAGSRDELRLVYGVSERTESDGAANLIQKLRAINYALGELGQWCAYKVAQSFLTALQNDERANYQVDVKFQESYLKKVVDLLHCQLTEGAAMKSETSDVEMQNTEKHNTNDLEEGELPDSHGEHVDEVIGAAVADGKVTPRVQALIKILLKYQHTEDFRAIIFVERVVTALVLPKVLAELPSLSFIRCASLIGHNNNQEMRACQMQDTISKFRDGRVTLLVATSVAEEGLDIRQCNVVIRFDLAKTVLAYIQSRGRARKPGSDYILMLERGNISHETFLRNARNSEETLRKEAMERTDLSHLDGTSVLSPVDTSPGSMYQVESTGAVVSLNSAVGLIHFYCSQLPSDRYSILHPEFIMQKYEKPGGSVEYSCKLQLPCNAPFEKLEGPICSSIRLAQQAVCLAACKKLHEMGAFTDTLLPDRGSGEGEKTEQNDEGEPLPGTARHREFYPEGVADILRGEWILSGRDGYQNSQFIKLYMYSVNCVNVGTSKDPFVTQLSNFAIIFGNELDAEVLSTTMDLFVARTMITKASLVFRGRIEITESQLVLLKSFHVRLMSIVLDVDVDPSTTPWDPAKAYLFVPVGAEKCTDPLREIDWTLVNNIVNTDAWNNPLQRARPDVYLGTNERTLGGDRREYGFGKLRHGTAFGQKAHPTYGIRGAIAEFDIVKASGLVPARDRGHFSDYQNQGKLFMADSCWNAKDLAGMVVTAAHSGKRFYVDCICYNMNAENSFPRKEGYLGPLEYSSYADYYKQKYGVELIYRKQPLIRARGVSYCKNLLSPRFEHSDAREGDFSENLDKTYYVYLPPELCLVHPLPGSLVRGAQRLPSIMRRVESMLLAVQLKDIIDYPVPATKILEALTAASCQETLCYERAELLGDAYLKWVVSRFLFLKYPQKHEGQLTRMRQQMVSNMVLYQYALNKTLQSYIQADRFAPSRWAAPGVLPVFDEESREYEPSIFDEESTGCELQKESYDDYADNMQEDGEIEGDSSCYRVLSSKTLADVVEALIGVYYVAGGKIAANHLMKWIGIHAELDPEEIPPPKPYDIPESIMRSINFDTLKGVLGIEFQNKGLLVEAITHASRPSSGVSCYQRLEFVGDAVLDHLITRHLFFTYTDLPPGRLTDLRAAAVNNENFARVAVKHKLHVHLRHGSSALETQIREFVKDVQEELLKPGFNSFGLGDCKAPKVLGDIVESIAGAIFLDSGYDTSVVWKVFQPLLHPMVTPETLPMHPVRELQERCQQQAEGLEYKASRAGNIATVEVFVDGVQIGVAQNPQKKMAQKLAARNALVVLKEKETATKKEDERDGEKKNGAQMFTRQTLNDICLRRQWPMPQYRCVNEGGPAHAKRFVYSVRVNTSDRGWTDECIGEPMPSVKKAKDSAAVLLLELLNRDFPDKPDGKQP.

Disordered stretches follow at residues 71–97, 129–188, and 221–262; these read AESSPAPPPPPPPPLPEPVPVAPPELP, ARKE…DDRR, and RSGT…EKPV. Over residues 75 to 96 the composition is skewed to pro residues; it reads PAPPPPPPPPLPEPVPVAPPEL. Basic and acidic residues-rich tracts occupy residues 129–138 and 228–262; these read ARKEPRRESH and ESDREAKRARTQDGGSMEKKAEADRMGAAQREKPV. The Helicase ATP-binding domain occupies 274–413; the sequence is VLEQAKSRNT…QEDCAIKIRN (140 aa). 287-294 contributes to the ATP binding site; it reads LETGAGKT. The DECH box motif lies at 358 to 361; the sequence is DECH. The interval 577-604 is disordered; it reads KSETSDVEMQNTEKHNTNDLEEGELPDS. The Helicase C-terminal domain maps to 629-789; sequence LIKILLKYQH…RTDLSHLDGT (161 aa). In terms of domain architecture, Dicer dsRNA-binding fold spans 817 to 912; it reads AVGLIHFYCS…LPDRGSGEGE (96 aa). The tract at residues 901–928 is disordered; the sequence is TLLPDRGSGEGEKTEQNDEGEPLPGTAR. The segment covering 907–916 has biased composition (basic and acidic residues); sequence GSGEGEKTEQ. Residues 1163–1296 form the PAZ domain; the sequence is HFSDYQNQGK…LPPELCLVHP (134 aa). 2 RNase III domains span residues 1320–1498 and 1538–1686; these read LAVQ…VAGG and FDTL…LDSG. Positions 1576, 1672, and 1675 each coordinate Mg(2+). DRBM domains lie at 1712–1775 and 1797–1872; these read HPVR…VLKE and FTRQ…LLNR.

Belongs to the helicase family. Dicer subfamily. As to quaternary structure, may interact with ARGONAUTE1 or PINHEAD through their common PAZ domains. Requires Mg(2+) as cofactor. The cofactor is Mn(2+).

It localises to the nucleus. Functionally, involved in the RNA silencing pathway. Cleaves double-stranded RNA to produce microRNAs (miRNAs) of 21-24 nucleotides which target the selective destruction of complementary RNAs. Regulates by this way the development of the plant. May not be involved in small interfering RNAs (siRNAs) production. The protein is Endoribonuclease Dicer homolog 1 (DCL1) of Oryza sativa subsp. japonica (Rice).